A 461-amino-acid polypeptide reads, in one-letter code: L-seryl-tRNA(Sec) selenium transferase (461 aa).

Position 294 is an N6-(pyridoxal phosphate)lysine (Lys294).

This sequence belongs to the SelA family. Pyridoxal 5'-phosphate is required as a cofactor.

Its subcellular location is the cytoplasm. It carries out the reaction L-seryl-tRNA(Sec) + selenophosphate + H(+) = L-selenocysteinyl-tRNA(Sec) + phosphate. It functions in the pathway aminoacyl-tRNA biosynthesis; selenocysteinyl-tRNA(Sec) biosynthesis; selenocysteinyl-tRNA(Sec) from L-seryl-tRNA(Sec) (bacterial route): step 1/1. In terms of biological role, converts seryl-tRNA(Sec) to selenocysteinyl-tRNA(Sec) required for selenoprotein biosynthesis. The polypeptide is L-seryl-tRNA(Sec) selenium transferase (Actinobacillus pleuropneumoniae serotype 5b (strain L20)).